Consider the following 318-residue polypeptide: uncharacterized protein (318 aa).

The interval 19-63 (VPPDARHHEPRPGMTDHPDTGNGIGLTGRPPRAIPDPAPRSSHGP) is disordered. Basic and acidic residues predominate over residues 21–37 (PDARHHEPRPGMTDHPD). 72–79 (QKGGVGKT) provides a ligand contact to ATP.

Belongs to the ParA family.

Functionally, may play a role in septum formation. This is an uncharacterized protein from Mycobacterium tuberculosis (strain CDC 1551 / Oshkosh).